The primary structure comprises 482 residues: Probable polyamine transporter At1g31820 (482 aa).

The next 11 helical transmembrane spans lie at 36 to 56 (VSMLPLVFLIFYEVSGGPFGA), 66 to 86 (LLALLGFVIFPFIWCIPEALI), 94 to 114 (FPINGGFVVWVSSALGTFWGF), 143 to 163 (VPALATGLPRVASILILTLLL), 171 to 191 (LTIVGWTAVFMGVFSMLPFAV), 254 to 274 (VIFVALSNFLPLLSGTGAIPL), 294 to 314 (GWLQLWVQAAAATSNMGMFLA), 344 to 364 (TPLLGILFSASGVLLLSGLSF), 367 to 387 (IIAAENLLYCGGMILEFIAFV), 406 to 426 (TVGSILICVPPIVLICLVIVL), and 429 to 449 (IKVALVSFVMVVIGFLMKPCL).

The protein belongs to the amino acid-polyamine-organocation (APC) superfamily. Polyamine:cation symporter (PHS) (TC 2.A.3.12) family.

Its subcellular location is the cell membrane. Functionally, probable cell membrane polyamine/proton symporter involved in the polyamine uptake in cells. This is Probable polyamine transporter At1g31820 from Arabidopsis thaliana (Mouse-ear cress).